The following is a 535-amino-acid chain: CTP synthase (535 aa).

Residues 1–268 are amidoligase domain; the sequence is MSTKYIFVTG…DQIVCDHLKL (268 aa). Serine 14 contributes to the CTP binding site. A UTP-binding site is contributed by serine 14. 15–20 provides a ligand contact to ATP; the sequence is SMGKGI. Tyrosine 55 provides a ligand contact to L-glutamine. Aspartate 72 lines the ATP pocket. Mg(2+) contacts are provided by aspartate 72 and glutamate 142. Residues 149-151, 189-194, and lysine 225 each bind CTP; these read DME and KTKIAQ. Residues 189–194 and lysine 225 each bind UTP; that span reads KTKIAQ. Residues 293 to 535 enclose the Glutamine amidotransferase type-1 domain; it reads KIALVGKYVE…FIRVAVENSK (243 aa). Glycine 355 contributes to the L-glutamine binding site. Cysteine 382 serves as the catalytic Nucleophile; for glutamine hydrolysis. L-glutamine-binding positions include 383–386, glutamate 406, and arginine 464; that span reads LGMQ. Catalysis depends on residues histidine 509 and glutamate 511.

Belongs to the CTP synthase family. As to quaternary structure, homotetramer.

The enzyme catalyses UTP + L-glutamine + ATP + H2O = CTP + L-glutamate + ADP + phosphate + 2 H(+). It carries out the reaction L-glutamine + H2O = L-glutamate + NH4(+). It catalyses the reaction UTP + NH4(+) + ATP = CTP + ADP + phosphate + 2 H(+). It functions in the pathway pyrimidine metabolism; CTP biosynthesis via de novo pathway; CTP from UDP: step 2/2. Allosterically activated by GTP, when glutamine is the substrate; GTP has no effect on the reaction when ammonia is the substrate. The allosteric effector GTP functions by stabilizing the protein conformation that binds the tetrahedral intermediate(s) formed during glutamine hydrolysis. Inhibited by the product CTP, via allosteric rather than competitive inhibition. In terms of biological role, catalyzes the ATP-dependent amination of UTP to CTP with either L-glutamine or ammonia as the source of nitrogen. Regulates intracellular CTP levels through interactions with the four ribonucleotide triphosphates. This Lactococcus lactis subsp. lactis (strain IL1403) (Streptococcus lactis) protein is CTP synthase.